The following is a 102-amino-acid chain: Methane monooxygenase component D (102 aa).

In terms of assembly, the soluble methane monooxygenase (sMMO) consists of four components A/MMOH (composed of alpha/MmoX, beta/MmoY and gamma/MmoZ), B/MMOB (MmoB), C/MMOR (MmoC) and D/MMOD (MmoD).

This chain is Methane monooxygenase component D (mmoD), found in Methylosinus trichosporium.